We begin with the raw amino-acid sequence, 243 residues long: Carboxy-S-adenosyl-L-methionine synthase (243 aa).

S-adenosyl-L-methionine is bound by residues tyrosine 40, 65–67, 90–91, 118–119, asparagine 133, and arginine 200; these read GCS, DN, and DI.

Belongs to the class I-like SAM-binding methyltransferase superfamily. Cx-SAM synthase family. In terms of assembly, homodimer.

It carries out the reaction prephenate + S-adenosyl-L-methionine = carboxy-S-adenosyl-L-methionine + 3-phenylpyruvate + H2O. In terms of biological role, catalyzes the conversion of S-adenosyl-L-methionine (SAM) to carboxy-S-adenosyl-L-methionine (Cx-SAM). This Shewanella sp. (strain ANA-3) protein is Carboxy-S-adenosyl-L-methionine synthase.